Consider the following 325-residue polypeptide: 7,8-didemethyl-8-hydroxy-5-deazariboflavin synthase (325 aa).

The Radical SAM core domain occupies 1-241; it reads MTYSKNVFVP…SDIAVQVAPN (241 aa). [4Fe-4S] cluster-binding residues include Cys-15, Cys-19, and Cys-22.

Belongs to the radical SAM superfamily. CofG family. In terms of assembly, consists of two subunits, CofG and CofH. Requires [4Fe-4S] cluster as cofactor.

It carries out the reaction 5-amino-5-(4-hydroxybenzyl)-6-(D-ribitylimino)-5,6-dihydrouracil + S-adenosyl-L-methionine = 7,8-didemethyl-8-hydroxy-5-deazariboflavin + 5'-deoxyadenosine + L-methionine + NH4(+) + H(+). It functions in the pathway cofactor biosynthesis; coenzyme F0 biosynthesis. Catalyzes the radical-mediated synthesis of 7,8-didemethyl-8-hydroxy-5-deazariboflavin from 5-amino-5-(4-hydroxybenzyl)-6-(D-ribitylimino)-5,6-dihydrouracil. The protein is 7,8-didemethyl-8-hydroxy-5-deazariboflavin synthase of Methanosarcina barkeri (strain Fusaro / DSM 804).